Reading from the N-terminus, the 64-residue chain is Small ribosomal subunit protein bS21 (64 aa).

It belongs to the bacterial ribosomal protein bS21 family.

The protein is Small ribosomal subunit protein bS21 of Sulfurihydrogenibium sp. (strain YO3AOP1).